A 262-amino-acid chain; its full sequence is Small ribosomal subunit protein eS1z (262 aa).

Over residues 1–18 (MAVGKNKRISKGRKGGKK) the composition is skewed to basic residues. Residues 1-21 (MAVGKNKRISKGRKGGKKKAV) are disordered.

This sequence belongs to the eukaryotic ribosomal protein eS1 family. Component of the small ribosomal subunit. Mature ribosomes consist of a small (40S) and a large (60S) subunit. The 40S subunit contains about 33 different proteins and 1 molecule of RNA (18S). The 60S subunit contains about 49 different proteins and 3 molecules of RNA (25S, 5.8S and 5S).

It localises to the cytoplasm. This is Small ribosomal subunit protein eS1z from Arabidopsis thaliana (Mouse-ear cress).